The chain runs to 167 residues: NADH-quinone oxidoreductase subunit I 1 (167 aa).

4Fe-4S ferredoxin-type domains follow at residues 52–82 and 98–127; these read LQRD…IEAA and KVYN…HGHG. [4Fe-4S] cluster contacts are provided by C62, C65, C68, C72, C107, C110, C113, and C117. Residues 148–167 are disordered; sequence PVPPGAKPPSMADEVPAGAH.

This sequence belongs to the complex I 23 kDa subunit family. In terms of assembly, NDH-1 is composed of 14 different subunits. Subunits NuoA, H, J, K, L, M, N constitute the membrane sector of the complex. The cofactor is [4Fe-4S] cluster.

The protein localises to the cell inner membrane. It carries out the reaction a quinone + NADH + 5 H(+)(in) = a quinol + NAD(+) + 4 H(+)(out). NDH-1 shuttles electrons from NADH, via FMN and iron-sulfur (Fe-S) centers, to quinones in the respiratory chain. The immediate electron acceptor for the enzyme in this species is believed to be ubiquinone. Couples the redox reaction to proton translocation (for every two electrons transferred, four hydrogen ions are translocated across the cytoplasmic membrane), and thus conserves the redox energy in a proton gradient. This chain is NADH-quinone oxidoreductase subunit I 1, found in Solibacter usitatus (strain Ellin6076).